Here is a 381-residue protein sequence, read N- to C-terminus: Sulfite reductase, dissimilatory-type subunit beta (381 aa).

[4Fe-4S] cluster contacts are provided by C151, C188, C189, C193, C231, C258, C261, and C264. C193 is a siroheme binding site. The 4Fe-4S ferredoxin-type domain maps to N249 to G276.

Heterohexamer of two alpha, two beta and two gamma subunits. [4Fe-4S] cluster is required as a cofactor. The cofactor is siroheme.

The catalysed reaction is [DsrC protein]-trisulfide + NAD(+) + 3 H2O = [DsrC protein]-dithiol + sulfite + NADH + 3 H(+). In terms of biological role, catalyzes the reduction of sulfite to sulfide. This is the terminal oxidation reaction in sulfate respiration, a process catalyzed by the sulfate-reducing bacteria. In Nitratidesulfovibrio vulgaris (strain ATCC 29579 / DSM 644 / CCUG 34227 / NCIMB 8303 / VKM B-1760 / Hildenborough) (Desulfovibrio vulgaris), this protein is Sulfite reductase, dissimilatory-type subunit beta (dsvB).